We begin with the raw amino-acid sequence, 326 residues long: Transposase for insertion sequence element IS4351 (326 aa).

One can recognise an Integrase catalytic domain in the interval 156 to 317 (IDERPEIVEL…TPNEKFKQII (162 aa)).

The protein belongs to the transposase IS30 family.

In terms of biological role, required for the transposition of the insertion element. This Bacteroides fragilis protein is Transposase for insertion sequence element IS4351.